Here is a 277-residue protein sequence, read N- to C-terminus: NH(3)-dependent NAD(+) synthetase (277 aa).

36–43 (GLSGGIDS) contacts ATP. D42 provides a ligand contact to Mg(2+). R118 serves as a coordination point for deamido-NAD(+). T138 serves as a coordination point for ATP. E143 contacts Mg(2+). ATP is bound by residues K167 and S189.

The protein belongs to the NAD synthetase family. In terms of assembly, homodimer.

The enzyme catalyses deamido-NAD(+) + NH4(+) + ATP = AMP + diphosphate + NAD(+) + H(+). Its pathway is cofactor biosynthesis; NAD(+) biosynthesis; NAD(+) from deamido-NAD(+) (ammonia route): step 1/1. Functionally, catalyzes the ATP-dependent amidation of deamido-NAD to form NAD. Uses ammonia as a nitrogen source. This chain is NH(3)-dependent NAD(+) synthetase, found in Chlorobium phaeobacteroides (strain BS1).